The sequence spans 421 residues: Histidine--tRNA ligase (421 aa).

The protein belongs to the class-II aminoacyl-tRNA synthetase family. As to quaternary structure, homodimer.

The protein resides in the cytoplasm. It carries out the reaction tRNA(His) + L-histidine + ATP = L-histidyl-tRNA(His) + AMP + diphosphate + H(+). The chain is Histidine--tRNA ligase from Fervidobacterium nodosum (strain ATCC 35602 / DSM 5306 / Rt17-B1).